Reading from the N-terminus, the 226-residue chain is MKIAVIVFPGSNCDIDLYEALKTVCGADVDYVDHQQTSLAGYDAVMLPGGFSYGDYLRAGAIARFAKIMPEVKRLADEGKPVFGTCNGFQILTEAGLLPGALKKNDSQNFVCKTTPLEVVNNQTIFTSQYQEHERINLPIAHADGSYFADQATLDELEANHQVVFRYAEENPNGSLNNIAGICNRAGNVLGMMPHPERAVEAILGNTDGLRVFKSLLENGTVIAEG.

The 225-residue stretch at 2–226 (KIAVIVFPGS…LENGTVIAEG (225 aa)) folds into the Glutamine amidotransferase type-1 domain. The Nucleophile role is filled by Cys86. Active-site residues include His195 and Glu197.

Part of the FGAM synthase complex composed of 1 PurL, 1 PurQ and 2 PurS subunits.

It localises to the cytoplasm. The catalysed reaction is N(2)-formyl-N(1)-(5-phospho-beta-D-ribosyl)glycinamide + L-glutamine + ATP + H2O = 2-formamido-N(1)-(5-O-phospho-beta-D-ribosyl)acetamidine + L-glutamate + ADP + phosphate + H(+). The enzyme catalyses L-glutamine + H2O = L-glutamate + NH4(+). Its pathway is purine metabolism; IMP biosynthesis via de novo pathway; 5-amino-1-(5-phospho-D-ribosyl)imidazole from N(2)-formyl-N(1)-(5-phospho-D-ribosyl)glycinamide: step 1/2. In terms of biological role, part of the phosphoribosylformylglycinamidine synthase complex involved in the purines biosynthetic pathway. Catalyzes the ATP-dependent conversion of formylglycinamide ribonucleotide (FGAR) and glutamine to yield formylglycinamidine ribonucleotide (FGAM) and glutamate. The FGAM synthase complex is composed of three subunits. PurQ produces an ammonia molecule by converting glutamine to glutamate. PurL transfers the ammonia molecule to FGAR to form FGAM in an ATP-dependent manner. PurS interacts with PurQ and PurL and is thought to assist in the transfer of the ammonia molecule from PurQ to PurL. This Limosilactobacillus fermentum (strain NBRC 3956 / LMG 18251) (Lactobacillus fermentum) protein is Phosphoribosylformylglycinamidine synthase subunit PurQ.